We begin with the raw amino-acid sequence, 266 residues long: Putative pyruvate, phosphate dikinase regulatory protein (266 aa).

Residue Gly149–Thr156 coordinates ADP.

It belongs to the pyruvate, phosphate/water dikinase regulatory protein family. PDRP subfamily.

It catalyses the reaction N(tele)-phospho-L-histidyl/L-threonyl-[pyruvate, phosphate dikinase] + ADP = N(tele)-phospho-L-histidyl/O-phospho-L-threonyl-[pyruvate, phosphate dikinase] + AMP + H(+). The enzyme catalyses N(tele)-phospho-L-histidyl/O-phospho-L-threonyl-[pyruvate, phosphate dikinase] + phosphate + H(+) = N(tele)-phospho-L-histidyl/L-threonyl-[pyruvate, phosphate dikinase] + diphosphate. In terms of biological role, bifunctional serine/threonine kinase and phosphorylase involved in the regulation of the pyruvate, phosphate dikinase (PPDK) by catalyzing its phosphorylation/dephosphorylation. The chain is Putative pyruvate, phosphate dikinase regulatory protein from Geobacillus thermodenitrificans (strain NG80-2).